The sequence spans 342 residues: 4-hydroxy-3-methylbut-2-enyl diphosphate reductase (342 aa).

A [4Fe-4S] cluster-binding site is contributed by cysteine 47. Histidine 78 and histidine 111 together coordinate (2E)-4-hydroxy-3-methylbut-2-enyl diphosphate. Positions 78 and 111 each coordinate dimethylallyl diphosphate. Isopentenyl diphosphate contacts are provided by histidine 78 and histidine 111. Cysteine 133 contributes to the [4Fe-4S] cluster binding site. A (2E)-4-hydroxy-3-methylbut-2-enyl diphosphate-binding site is contributed by histidine 161. Histidine 161 is a dimethylallyl diphosphate binding site. An isopentenyl diphosphate-binding site is contributed by histidine 161. Glutamate 163 functions as the Proton donor in the catalytic mechanism. Threonine 201 provides a ligand contact to (2E)-4-hydroxy-3-methylbut-2-enyl diphosphate. Position 231 (cysteine 231) interacts with [4Fe-4S] cluster. Residues serine 259, serine 260, asparagine 261, and serine 303 each coordinate (2E)-4-hydroxy-3-methylbut-2-enyl diphosphate. Residues serine 259, serine 260, asparagine 261, and serine 303 each coordinate dimethylallyl diphosphate. 4 residues coordinate isopentenyl diphosphate: serine 259, serine 260, asparagine 261, and serine 303.

It belongs to the IspH family. It depends on [4Fe-4S] cluster as a cofactor.

The catalysed reaction is isopentenyl diphosphate + 2 oxidized [2Fe-2S]-[ferredoxin] + H2O = (2E)-4-hydroxy-3-methylbut-2-enyl diphosphate + 2 reduced [2Fe-2S]-[ferredoxin] + 2 H(+). The enzyme catalyses dimethylallyl diphosphate + 2 oxidized [2Fe-2S]-[ferredoxin] + H2O = (2E)-4-hydroxy-3-methylbut-2-enyl diphosphate + 2 reduced [2Fe-2S]-[ferredoxin] + 2 H(+). The protein operates within isoprenoid biosynthesis; dimethylallyl diphosphate biosynthesis; dimethylallyl diphosphate from (2E)-4-hydroxy-3-methylbutenyl diphosphate: step 1/1. It participates in isoprenoid biosynthesis; isopentenyl diphosphate biosynthesis via DXP pathway; isopentenyl diphosphate from 1-deoxy-D-xylulose 5-phosphate: step 6/6. Its function is as follows. Catalyzes the conversion of 1-hydroxy-2-methyl-2-(E)-butenyl 4-diphosphate (HMBPP) into a mixture of isopentenyl diphosphate (IPP) and dimethylallyl diphosphate (DMAPP). Acts in the terminal step of the DOXP/MEP pathway for isoprenoid precursor biosynthesis. This Anaplasma marginale (strain St. Maries) protein is 4-hydroxy-3-methylbut-2-enyl diphosphate reductase.